The chain runs to 256 residues: MSLDALQQRLGYRFSKPELLQQALTHRSHSAMHNERLEFLGDSILNCAVADMLYGMFGKLDEGDLSRVRANLVKQQALYEIAQMLQLPDALRLGEGELKSGGFRRPSILADALEAIFGAVFLDGGFDAARTLIRKLYIPILEQVDPRTLGKDAKTLLQEYLQGHKIALPLYTVVATHGAAHNQQFEVECSIPKLEIRVSGSGASRRAAEQSAAKLALDEAHRLVPQLVKRSRAERTGKTRKQATPPDPQLSLRLKE.

Residues 3-125 enclose the RNase III domain; the sequence is LDALQQRLGY…IFGAVFLDGG (123 aa). Glu-38 is a binding site for Mg(2+). The active site involves Asp-42. Mg(2+) is bound by residues Asp-111 and Glu-114. Glu-114 is an active-site residue. The region spanning 152 to 222 is the DRBM domain; the sequence is DAKTLLQEYL…AKLALDEAHR (71 aa). Positions 226-256 are disordered; sequence QLVKRSRAERTGKTRKQATPPDPQLSLRLKE.

The protein belongs to the ribonuclease III family. As to quaternary structure, homodimer. The cofactor is Mg(2+).

The protein resides in the cytoplasm. The catalysed reaction is Endonucleolytic cleavage to 5'-phosphomonoester.. In terms of biological role, digests double-stranded RNA. Involved in the processing of primary rRNA transcript to yield the immediate precursors to the large and small rRNAs (23S and 16S). Processes some mRNAs, and tRNAs when they are encoded in the rRNA operon. Processes pre-crRNA and tracrRNA of type II CRISPR loci if present in the organism. The polypeptide is Ribonuclease 3 (Ralstonia pickettii (strain 12J)).